Here is a 426-residue protein sequence, read N- to C-terminus: Tyrosine--tRNA ligase (426 aa).

Tyrosine 38 serves as a coordination point for L-tyrosine. A 'HIGH' region motif is present at residues 43 to 52 (PTADSLHIGS). Residues tyrosine 176 and glutamine 180 each contribute to the L-tyrosine site. The short motif at 236-240 (KFGKT) is the 'KMSKS' region element. Lysine 239 provides a ligand contact to ATP. Residues 359–426 (QTIVEVLTQS…KKLFNLYIWK (68 aa)) enclose the S4 RNA-binding domain.

It belongs to the class-I aminoacyl-tRNA synthetase family. TyrS type 1 subfamily. In terms of assembly, homodimer.

It localises to the cytoplasm. The enzyme catalyses tRNA(Tyr) + L-tyrosine + ATP = L-tyrosyl-tRNA(Tyr) + AMP + diphosphate + H(+). Catalyzes the attachment of tyrosine to tRNA(Tyr) in a two-step reaction: tyrosine is first activated by ATP to form Tyr-AMP and then transferred to the acceptor end of tRNA(Tyr). The sequence is that of Tyrosine--tRNA ligase from Aliivibrio fischeri (strain ATCC 700601 / ES114) (Vibrio fischeri).